Consider the following 729-residue polypeptide: Rho GTPase-activating protein 28 (729 aa).

The tract at residues 1–78 (MEVEDSGGVV…ASVDSSASME (78 aa)) is disordered. Residues 37–49 (LSRKSIPRCRRIN) show a composition bias toward basic residues. A compositionally biased stretch (low complexity) spans 63 to 76 (SRSNSQASVDSSAS). Phosphoserine is present on serine 70. Phosphothreonine is present on threonine 164. The interval 180–234 (FGVSESPPSDSCEHATQLDGTKEEKDLPGVTKTSRPLPDDASLSSTTLSNGAQDE) is disordered. Over residues 221–231 (SLSSTTLSNGA) the composition is skewed to polar residues. Residues 384–581 (VPLTVLLDND…LMLKYQKILW (198 aa)) enclose the Rho-GAP domain.

Functionally, GTPase activator for the Rho-type GTPases by converting them to an inactive GDP-bound state. This is Rho GTPase-activating protein 28 (Arhgap28) from Mus musculus (Mouse).